We begin with the raw amino-acid sequence, 959 residues long: Nucleoporin NUP100/NSP100 (959 aa).

The interval 1 to 104 (MFGNNRPMFG…NSSNASNGNT (104 aa)) is disordered. FG repeat units lie at residues 2-3 (FG), 9-10 (FG), and G17. Residues 12–36 (SNLSFGSNTSSFGGQQSQQPNSLFG) are compositionally biased toward polar residues. An SLFG 1; approximate repeat occupies 21–24 (SSFG). Residues 33–36 (SLFG) form an SLFG 2 repeat. A compositionally biased stretch (low complexity) spans 37 to 48 (NSNNNNNSTSNN). Residues 51-54 (SGFG) form an SLFG 3; approximate repeat. Low complexity-rich tracts occupy residues 56 to 81 (FTSA…AFGQ) and 92 to 104 (GSLN…NGNT). The stretch at 66–69 (SLFG) is one SLFG 4 repeat. One copy of the GLFG 1; approximate repeat lies at 77–80 (GAFG). The SLFG 5; approximate repeat unit spans residues 89 to 92 (SPFG). An FG 4 repeat occupies 105–106 (FG). One copy of the GLFG 2; approximate repeat lies at 112–115 (GSFG). Over residues 121 to 136 (AFNNNSNSTNSPFGFN) the composition is skewed to low complexity. Positions 121-172 (AFNNNSNSTNSPFGFNKPNTGGTLFGSQNNNSAGTSSLFGGQSTSTTGTFGN) are disordered. An SLFG 6; approximate repeat occupies 131–134 (SPFG). Residues 137–153 (KPNTGGTLFGSQNNNSA) show a composition bias toward polar residues. An FG 5 repeat occupies 145 to 146 (FG). Residues 154–172 (GTSSLFGGQSTSTTGTFGN) are compositionally biased toward low complexity. The SLFG 7 repeat unit spans residues 157–160 (SLFG). The stretch at 168–171 (GTFG) is one GLFG 3; approximate repeat. An SLFG 8; approximate repeat occupies 175–178 (SSFG). Residues 189-190 (FG) form an FG 6 repeat. Residues 190–394 (GAGNNSQSNT…NNQQQQSTGL (205 aa)) are disordered. The segment covering 192-245 (GNNSQSNTTGSLFGNQQSSAFGTNNQQGSLFGQQSQNTNNAFGNQNQLGGSSFG) has biased composition (polar residues). One copy of the SLFG 9 repeat lies at 202–205 (SLFG). An SLFG 10; approximate repeat occupies 210 to 213 (SAFG). One copy of the SLFG 11 repeat lies at 220-223 (SLFG). The FG 7 repeat unit spans residues 233–234 (FG). The SLFG 12; approximate repeat unit spans residues 242 to 245 (SSFG). The SLFG 13 repeat unit spans residues 253–256 (SLFG). Low complexity predominate over residues 259 to 293 (NNTLGNTTNNRNGLFGQMNSSNQGSSNSGLFGQNS). 2 GLFG repeats span residues 271-274 (GLFG) and 287-290 (GLFG). Residues 294–303 (MNSSTQGVFG) are compositionally biased toward polar residues. Residues 300-303 (GVFG) form a GLFG 6; approximate repeat. Positions 304-317 (QNNNQMQINGNNNN) are enriched in low complexity. The stretch at 318–321 (SLFG) is one SLFG 14 repeat. 5 GLFG repeats span residues 333 to 336 (GLFG), 345 to 348 (GLFG), 358 to 361 (GLFG), 379 to 382 (GLFG), and 393 to 396 (GLFG). Positions 336 to 352 (GQNNQQQGSGLFGQNSQ) are enriched in low complexity. Polar residues predominate over residues 353–377 (TSGSSGLFGQNNQKQPNTFTQSNTG). SLFG repeat units lie at residues 405–408 (SLFG), 417–420 (SLFG), and 436–439 (SLFG). Residues 448 to 449 (FG) form an FG 8 repeat. The SLFG 18 repeat unit spans residues 462–465 (SLFG). An SLFG 19; approximate repeat occupies 474 to 477 (SLFG). 3 GLFG repeats span residues 490–493 (GLFG), 506–509 (GLFG), and 523–526 (GLFG). Residues 542 to 543 (FG) form an FG 9 repeat. The GLFG 15 repeat unit spans residues 550-553 (GLFG). One copy of the FG 10 repeat lies at 569 to 570 (FG). Disordered regions lie at residues 672-697 (TLER…LNSN) and 745-794 (DDQA…PMIE). Polar residues predominate over residues 679 to 697 (GSSTSNSITDPESSYLNSN). Residues 757–775 (LTEKAHSPQTDLKDDHDES) are compositionally biased toward basic and acidic residues. Phosphoserine is present on residues S763 and S783. Over residues 777 to 790 (PDPQSKSPNGSTSI) the composition is skewed to polar residues. One can recognise a Peptidase S59 domain in the interval 814 to 956 (KNNYYISPSI…GTYSYTIDHP (143 aa)). A nucleoporin RNA-binding motif (NRM) region spans residues 816 to 955 (NYYISPSIET…TGTYSYTIDH (140 aa)).

The protein belongs to the nucleoporin GLFG family. As to quaternary structure, component of the nuclear pore complex (NPC). NPC constitutes the exclusive means of nucleocytoplasmic transport. NPCs allow the passive diffusion of ions and small molecules and the active, nuclear transport receptor-mediated bidirectional transport of macromolecules such as proteins, RNAs, ribonucleoparticles (RNPs), and ribosomal subunits across the nuclear envelope. Due to its 8-fold rotational symmetry, all subunits are present with 8 copies or multiples thereof. Through its FG repeats NUP100 interacts with numerous karyopherins including KAP95, and MEX67.

It is found in the nucleus. It localises to the nuclear pore complex. Its subcellular location is the nucleus membrane. Its function is as follows. Functions as a component of the nuclear pore complex (NPC). NPC components, collectively referred to as nucleoporins (NUPs), can play the role of both NPC structural components and of docking or interaction partners for transiently associated nuclear transport factors. Active directional transport is assured by both, a Phe-Gly (FG) repeat affinity gradient for these transport factors across the NPC and a transport cofactor concentration gradient across the nuclear envelope (GSP1 and GSP2 GTPases associated predominantly with GTP in the nucleus, with GDP in the cytoplasm). NUP100 plays an important role in several nuclear export and import pathways including poly(A)+ RNA and protein transport. In Saccharomyces cerevisiae (strain ATCC 204508 / S288c) (Baker's yeast), this protein is Nucleoporin NUP100/NSP100 (NUP100).